The sequence spans 426 residues: Synaptotagmin-13 (426 aa).

Residues 1-6 are Vesicular-facing; that stretch reads MVLSVP. The chain crosses the membrane as a helical span at residues 7–29; that stretch reads VIALGATLGTATSILALCGVTCL. Topologically, residues 30-426 are cytoplasmic; it reads CRHMHPKKGL…QIAMWHQLHL (397 aa). C2 domains are found at residues 158–275 and 287–422; these read QAPK…AQWG and GTGE…AMWH.

Belongs to the synaptotagmin family. Interacts with NRXN1. In terms of tissue distribution, expressed in brain, spleen, kidney and testis.

It is found in the membrane. In terms of biological role, may be involved in transport vesicle docking to the plasma membrane. This Rattus norvegicus (Rat) protein is Synaptotagmin-13 (Syt13).